We begin with the raw amino-acid sequence, 229 residues long: Protein AF_2251 (229 aa).

Belongs to the CinA family.

The chain is Protein AF_2251 from Archaeoglobus fulgidus (strain ATCC 49558 / DSM 4304 / JCM 9628 / NBRC 100126 / VC-16).